We begin with the raw amino-acid sequence, 273 residues long: Type II iodothyronine deiodinase (273 aa).

Residues 1–9 (MGILSVDLL) are Lumenal-facing. The helical; Signal-anchor for type III membrane protein transmembrane segment at 10–34 (ITLQILPVFFSNCLFLALYDSVILL) threads the bilayer. At 35–273 (KHVVLLLSRS…KRUKKTRLAG (239 aa)) the chain is on the cytoplasmic side. Residue Sec-133 is part of the active site. Non-standard amino acids (selenocysteine) are located at Sec-133 and Sec-266.

The protein belongs to the iodothyronine deiodinase family. As to quaternary structure, predominantly monomer. Can form homodimers but homodimerization is not essential for enzyme activity. Interacts with USP20 and USP33. Interacts with MARCHF6. Post-translationally, ubiquitinated by MARCHF6, leading to its degradation by the proteasome. Deubiquitinated by USP20 and USP33. Isoform 1 is expressed in the lung, trachea, kidney, heart, skeletal muscle, placenta, fetal brain and several regions of the adult brain. Isoform 2 is expressed in the brain, heart, kidney and trachea.

It localises to the endoplasmic reticulum membrane. The enzyme catalyses 3,3',5-triiodo-L-thyronine + iodide + A + H(+) = L-thyroxine + AH2. It carries out the reaction 3,3'-diiodo-L-thyronine + iodide + A + H(+) = 3,3',5'-triiodo-L-thyronine + AH2. It catalyses the reaction 3'-iodo-L-thyronine + iodide + A + H(+) = 3',5'-diiodo-L-thyronine + AH2. The catalysed reaction is 3,3'-diiodothyronamine + iodide + A + H(+) = 3,3',5'-triiodothyronamine + AH2. The enzyme catalyses 3'-iodothyronamine + iodide + A + H(+) = 3',5'-diiodothyronamine + AH2. Plays a crucial role in the metabolism of thyroid hormones (TH) and has specific roles in TH activation and inactivation by deiodination. Catalyzes the deiodination of L-thyroxine (T4) to 3,5,3'-triiodothyronine (T3), 3,3',5'-triiodothyronine (rT3) to 3,3'-diiodothyronine (3,3'-T2) and 3',5'-diiodothyronine (3',5'-T2) to 3'-monoiodothyronine (3'-T1) via outer-ring deiodination (ORD). Catalyzes the phenolic ring deiodinations of 3,3',5'-triiodothyronamine and 3',5'- diiodothyronamine. This is Type II iodothyronine deiodinase (DIO2) from Homo sapiens (Human).